The primary structure comprises 92 residues: Defensin-like protein 294 (92 aa).

The signal sequence occupies residues 1 to 26; it reads MASRATSLFIFFFLISCTFMLLETNA. Cystine bridges form between C63-C82, C69-C87, and C75-C89.

Belongs to the DEFL family.

The protein localises to the secreted. The chain is Defensin-like protein 294 from Arabidopsis thaliana (Mouse-ear cress).